Consider the following 339-residue polypeptide: Dehydrogenase/reductase SDR family member 7 (339 aa).

An N-terminal signal peptide occupies residues Met1–Ala28. NAD(+) is bound by residues Ser60 and Ile62. Ser190 lines the substrate pocket. Tyr203, Lys207, and Ser239 together coordinate NAD(+). Tyr203 serves as the catalytic Proton acceptor.

The protein belongs to the short-chain dehydrogenases/reductases (SDR) family. In terms of tissue distribution, found predominantly in the adrenal glands, liver, thyroid, prostate, small intestine, colon, stomach, kidney and brain. Lower levels observed in skeletal muscle, the lung and the spleen.

It localises to the endoplasmic reticulum membrane. The enzyme catalyses all-trans-retinol + NADP(+) = all-trans-retinal + NADPH + H(+). The catalysed reaction is 5alpha-androstane-3alpha,17beta-diol + NADP(+) = 17beta-hydroxy-5alpha-androstan-3-one + NADPH + H(+). NADPH-dependent oxidoreductase which catalyzes the reduction of a variety of compounds bearing carbonyl groups including steroids, retinoids and xenobiotics. Catalyzes the reduction/inactivation of 5alpha-dihydrotestosterone to 3alpha-androstanediol, with a possible role in the modulation of androgen receptor function. Involved in the reduction of all-trans-retinal to all-trans-retinol. Converts cortisone to 20beta-dihydrocortisone in vitro, although the physiological relevance of this activity is questionable. Reduces exogenous compounds such as quinones (1,2-naphtoquinone, 9,10-phenantrenequinone and benzoquinone) and other xenobiotics (alpha-diketones) in vitro, suggesting a role in the biotransformation of xenobiotics with carbonyl group. A dehydrogenase activity has not been detected so far. May play a role as tumor suppressor. This Homo sapiens (Human) protein is Dehydrogenase/reductase SDR family member 7.